The chain runs to 191 residues: Small ribosomal subunit protein uS7 (191 aa).

The disordered stretch occupies residues 56–80 (NKSGEQGDGDGEGGGKAGGIKKRSL).

It belongs to the universal ribosomal protein uS7 family. As to quaternary structure, part of the 30S ribosomal subunit. Contacts proteins S9 and S11.

One of the primary rRNA binding proteins, it binds directly to 16S rRNA where it nucleates assembly of the head domain of the 30S subunit. Is located at the subunit interface close to the decoding center, probably blocks exit of the E-site tRNA. This is Small ribosomal subunit protein uS7 from Coxiella burnetii (strain CbuG_Q212) (Coxiella burnetii (strain Q212)).